Reading from the N-terminus, the 70-residue chain is Large ribosomal subunit protein bL31c (70 aa).

It belongs to the bacterial ribosomal protein bL31 family. Type A subfamily. Part of the 50S ribosomal subunit.

Its subcellular location is the plastid. The protein localises to the chloroplast. Binds the 23S rRNA. The protein is Large ribosomal subunit protein bL31c of Pyropia yezoensis (Susabi-nori).